A 327-amino-acid chain; its full sequence is Phenylalanine--tRNA ligase alpha subunit (327 aa).

Glu-252 lines the Mg(2+) pocket.

The protein belongs to the class-II aminoacyl-tRNA synthetase family. Phe-tRNA synthetase alpha subunit type 1 subfamily. Tetramer of two alpha and two beta subunits. Mg(2+) serves as cofactor.

Its subcellular location is the cytoplasm. The enzyme catalyses tRNA(Phe) + L-phenylalanine + ATP = L-phenylalanyl-tRNA(Phe) + AMP + diphosphate + H(+). This Pectobacterium atrosepticum (strain SCRI 1043 / ATCC BAA-672) (Erwinia carotovora subsp. atroseptica) protein is Phenylalanine--tRNA ligase alpha subunit.